A 335-amino-acid polypeptide reads, in one-letter code: MATVPTALAGRHFLKELDFTAEEFRGLLELAAELKAAKKARTETLYLRGRNIALVFEKTSTRTRCAFEVAAADQGASTTYLDPAGSQIGHKESVKDTARVLGRMFDGIEYRGHGQGVVEELAAHAGVPVYNGLTDEWHPTQMLADALTMTEHSDKPLTEIAYAYLGDARYNMGNSYLVTGALLGMDVRIVAPRLLWPDETIVEVAQQLAVASGARITLTEDVKEGVRGADFVATDVWVSMGEPKEVWDERIGLLGPYAVTMDVLRATGNDDVKFLHCLPAFHDLGTDIGREIHARHGLTSLEVTDEVFESAHSVVFDEAENRMHTIKAVLVATLA.

Carbamoyl phosphate-binding positions include serine 60–threonine 63, glutamine 87, arginine 111, and histidine 138–glutamine 141. L-ornithine contacts are provided by residues asparagine 171, aspartate 235, and serine 239–methionine 240. Residues cysteine 277–leucine 278 and arginine 322 contribute to the carbamoyl phosphate site.

The protein belongs to the aspartate/ornithine carbamoyltransferase superfamily. OTCase family.

It is found in the cytoplasm. It catalyses the reaction carbamoyl phosphate + L-ornithine = L-citrulline + phosphate + H(+). The protein operates within amino-acid biosynthesis; L-arginine biosynthesis; L-arginine from L-ornithine and carbamoyl phosphate: step 1/3. In terms of biological role, reversibly catalyzes the transfer of the carbamoyl group from carbamoyl phosphate (CP) to the N(epsilon) atom of ornithine (ORN) to produce L-citrulline. The polypeptide is Ornithine carbamoyltransferase (Streptomyces avermitilis (strain ATCC 31267 / DSM 46492 / JCM 5070 / NBRC 14893 / NCIMB 12804 / NRRL 8165 / MA-4680)).